The chain runs to 356 residues: Replication factor C subunit 3 (356 aa).

The residue at position 20 (K20) is an N6-acetyllysine. Residue S125 is modified to Phosphoserine.

Belongs to the activator 1 small subunits family. As to quaternary structure, subunit of the RFC complex, an heteropentameric complex consisting of a large subunit RFC1 and four small subunits RFC2, RFC3, RFC4 and RFC5; the RFC complex interacts with PCNA. Forms an heterotetrameric complex with RFC2, RFC4 and RFC5; this complex has ATPase activity but is not stimulated by PCNA. The heterotetramer of subunits RFC2, RFC3, RFC4 and RFC5 interacts with RAD17. Interacts with CNTD1; this interaction facilitates crossover formation.

It localises to the nucleus. Functionally, subunit of the replication factor C (RFC) complex which acts during elongation of primed DNA templates by DNA polymerases delta and epsilon, and is necessary for ATP-dependent loading of proliferating cell nuclear antigen (PCNA) onto primed DNA. This is Replication factor C subunit 3 (RFC3) from Bos taurus (Bovine).